The following is a 210-amino-acid chain: MKGGLLVDDEFIHGEERSLTVRKTSLFFAGDGFTVYDCKGSLVFRVDSYGGPNTRDTDEVVLMDAHGRCLLTLRRKRPSLRRRWEGYLGERSDGQKPIFGVRRSSIIGRNSVTVEVYGDYQCSEYLIEGSFGARNCTVVEAETRRKVAEIRRKVDASTNVMLGKDVFSLNVKPGFDGAFAMGLVLVLDQIYGDDLLEVGEEQVHPSAEDL.

The protein belongs to the LOR family.

In terms of biological role, might be related to the phospholipid scramblase and tubby-like superfamily of membrane tethered transcription factors. The protein is Protein LURP-one-related 5 of Arabidopsis thaliana (Mouse-ear cress).